A 196-amino-acid polypeptide reads, in one-letter code: Large ribosomal subunit protein eL15 (196 aa).

Residues 69 to 98 are compositionally biased toward basic residues; sequence RKGGSRKQRHKAGRRSKRQGVNRLSRRKSI. Disordered regions lie at residues 69–100 and 161–196; these read RKGG…SIQR and FRGL…RQGK. The segment covering 186-196 has biased composition (polar residues); the sequence is PSVTGNDRQGK.

It belongs to the eukaryotic ribosomal protein eL15 family.

This chain is Large ribosomal subunit protein eL15, found in Halorubrum lacusprofundi (strain ATCC 49239 / DSM 5036 / JCM 8891 / ACAM 34).